Reading from the N-terminus, the 142-residue chain is Large ribosomal subunit protein uL11 (142 aa).

The protein belongs to the universal ribosomal protein uL11 family. In terms of assembly, part of the ribosomal stalk of the 50S ribosomal subunit. Interacts with L10 and the large rRNA to form the base of the stalk. L10 forms an elongated spine to which L12 dimers bind in a sequential fashion forming a multimeric L10(L12)X complex. In terms of processing, one or more lysine residues are methylated.

Forms part of the ribosomal stalk which helps the ribosome interact with GTP-bound translation factors. This is Large ribosomal subunit protein uL11 from Shewanella sp. (strain ANA-3).